The primary structure comprises 444 residues: Tubulin beta-2 chain (444 aa).

Residues Gln11, Glu69, Ser138, Gly142, Thr143, Gly144, Asn204, and Asn226 each coordinate GTP. Residue Glu69 coordinates Mg(2+). Residues Tyr422–Asp444 are disordered. The segment covering Thr429–Asp444 has biased composition (acidic residues).

Belongs to the tubulin family. Dimer of alpha and beta chains. A typical microtubule is a hollow water-filled tube with an outer diameter of 25 nm and an inner diameter of 15 nM. Alpha-beta heterodimers associate head-to-tail to form protofilaments running lengthwise along the microtubule wall with the beta-tubulin subunit facing the microtubule plus end conferring a structural polarity. Microtubules usually have 13 protofilaments but different protofilament numbers can be found in some organisms and specialized cells. It depends on Mg(2+) as a cofactor. In terms of tissue distribution, found in areas of rapidly dividing tissues.

The protein resides in the cytoplasm. The protein localises to the cytoskeleton. In terms of biological role, tubulin is the major constituent of microtubules, a cylinder consisting of laterally associated linear protofilaments composed of alpha- and beta-tubulin heterodimers. Microtubules grow by the addition of GTP-tubulin dimers to the microtubule end, where a stabilizing cap forms. Below the cap, tubulin dimers are in GDP-bound state, owing to GTPase activity of alpha-tubulin. The polypeptide is Tubulin beta-2 chain (TUBB2) (Daucus carota (Wild carrot)).